The sequence spans 519 residues: Bifunctional dihydrofolate reductase-thymidylate synthase 1 (519 aa).

At A2 the chain carries N-acetylalanine. In terms of domain architecture, DHFR spans 21 to 198 (TYQVVVAATK…LRFCFTTFVR (178 aa)). V25 contributes to the substrate binding site. Residues A27 and 33-39 (GIGKDGK) contribute to the NADP(+) site. A substrate-binding site is contributed by D47. NADP(+)-binding positions include 71-73 (RKT) and 92-95 (LTRS). I134 is a binding site for substrate. Residue 135 to 142 (GGGDILRE) participates in NADP(+) binding. T155 lines the substrate pocket. Residues 201-234 (SSADESSDESNGSQSLQFDGKKFLFLPKMVFDQH) form a hinge region. The tract at residues 235-519 (EEFLYLNMVE…HKKIEMKMAV (285 aa)) is thymidylate synthase. R256 is a binding site for dUMP. C401 is a catalytic residue. DUMP-binding positions include H402, 420–424 (QRSAD), N432, and 462–464 (HVY).

In the N-terminal section; belongs to the dihydrofolate reductase family. This sequence in the C-terminal section; belongs to the thymidylate synthase family. In terms of assembly, heterodimer or homodimer.

The enzyme catalyses (6S)-5,6,7,8-tetrahydrofolate + NADP(+) = 7,8-dihydrofolate + NADPH + H(+). It catalyses the reaction dUMP + (6R)-5,10-methylene-5,6,7,8-tetrahydrofolate = 7,8-dihydrofolate + dTMP. It functions in the pathway cofactor biosynthesis; tetrahydrofolate biosynthesis; 5,6,7,8-tetrahydrofolate from 7,8-dihydrofolate: step 1/1. In terms of biological role, bifunctional enzyme. Involved in de novo dTMP biosynthesis. Key enzyme in folate metabolism. Can play two different roles depending on the source of dihydrofolate: de novo synthesis of tetrahydrofolate or recycling of the dihydrofolate released as one of the end products of the TS catalyzed reaction. Catalyzes an essential reaction for de novo glycine and purine synthesis, DNA precursor synthesis, and for the conversion of dUMP to dTMP. The sequence is that of Bifunctional dihydrofolate reductase-thymidylate synthase 1 (THY-1) from Arabidopsis thaliana (Mouse-ear cress).